Here is an 82-residue protein sequence, read N- to C-terminus: Short neurotoxin OKI-10 (82 aa).

Residues K1–T20 form the signal peptide. 4 disulfides stabilise this stretch: C23/C44, C37/C61, C63/C74, and C75/C80.

The protein belongs to the three-finger toxin family. Short-chain subfamily. Type I alpha-neurotoxin sub-subfamily. In terms of tissue distribution, expressed by the venom gland.

The protein localises to the secreted. In terms of biological role, binds to muscle nicotinic acetylcholine receptor (nAChR) and inhibit acetylcholine from binding to the receptor, thereby impairing neuromuscular transmission. The protein is Short neurotoxin OKI-10 of Laticauda laticaudata (Blue-ringed sea krait).